A 269-amino-acid polypeptide reads, in one-letter code: Flagellar hook-basal body complex protein FlhP (269 aa).

Positions 7–65 (TASTTLNQLQQQIDTISSNLSNSNTTGYKAKDTNFSELVRQQFDQVDEKNEEVAKARKT) form a coiled coil.

It belongs to the flagella basal body rod proteins family.

The sequence is that of Flagellar hook-basal body complex protein FlhP (flhP) from Bacillus subtilis (strain 168).